Here is a 683-residue protein sequence, read N- to C-terminus: DNA ligase (683 aa).

NAD(+) contacts are provided by residues 43 to 47 (DAEYD), 92 to 93 (SL), and Glu125. The N6-AMP-lysine intermediate role is filled by Lys127. NAD(+)-binding residues include Arg148, Glu185, Lys303, and Lys327. Cys421, Cys424, Cys439, and Cys445 together coordinate Zn(2+). One can recognise a BRCT domain in the interval 604–683 (IADNPLKGKN…QEFIALTGEN (80 aa)).

Belongs to the NAD-dependent DNA ligase family. LigA subfamily. Requires Mg(2+) as cofactor. The cofactor is Mn(2+).

It carries out the reaction NAD(+) + (deoxyribonucleotide)n-3'-hydroxyl + 5'-phospho-(deoxyribonucleotide)m = (deoxyribonucleotide)n+m + AMP + beta-nicotinamide D-nucleotide.. Functionally, DNA ligase that catalyzes the formation of phosphodiester linkages between 5'-phosphoryl and 3'-hydroxyl groups in double-stranded DNA using NAD as a coenzyme and as the energy source for the reaction. It is essential for DNA replication and repair of damaged DNA. The polypeptide is DNA ligase (Actinobacillus pleuropneumoniae serotype 5b (strain L20)).